Reading from the N-terminus, the 481-residue chain is Glutamyl-tRNA(Gln) amidotransferase subunit A (481 aa).

Residues lysine 78 and serine 153 each act as charge relay system in the active site. The active-site Acyl-ester intermediate is the serine 177.

The protein belongs to the amidase family. GatA subfamily. Heterotrimer of A, B and C subunits.

It carries out the reaction L-glutamyl-tRNA(Gln) + L-glutamine + ATP + H2O = L-glutaminyl-tRNA(Gln) + L-glutamate + ADP + phosphate + H(+). Its function is as follows. Allows the formation of correctly charged Gln-tRNA(Gln) through the transamidation of misacylated Glu-tRNA(Gln) in organisms which lack glutaminyl-tRNA synthetase. The reaction takes place in the presence of glutamine and ATP through an activated gamma-phospho-Glu-tRNA(Gln). The sequence is that of Glutamyl-tRNA(Gln) amidotransferase subunit A from Borreliella afzelii (strain PKo) (Borrelia afzelii).